A 235-amino-acid chain; its full sequence is Nucleoside diphosphate kinase 4, chloroplastic (235 aa).

K93, F141, R169, T175, R186, and N196 together coordinate ATP. H199 functions as the Pros-phosphohistidine intermediate in the catalytic mechanism.

It belongs to the NDK family. Homohexamer. Requires Mg(2+) as cofactor.

The protein localises to the plastid. It localises to the chloroplast thylakoid lumen. It catalyses the reaction a 2'-deoxyribonucleoside 5'-diphosphate + ATP = a 2'-deoxyribonucleoside 5'-triphosphate + ADP. It carries out the reaction a ribonucleoside 5'-diphosphate + ATP = a ribonucleoside 5'-triphosphate + ADP. Functionally, major role in the synthesis of nucleoside triphosphates other than ATP. The ATP gamma phosphate is transferred to the NDP beta phosphate via a ping-pong mechanism, using a phosphorylated active-site intermediate. Shows the highest specificity towards GDP. The sequence is that of Nucleoside diphosphate kinase 4, chloroplastic (NDK4) from Spinacia oleracea (Spinach).